Reading from the N-terminus, the 528-residue chain is Importin subunit alpha-7 (528 aa).

The IBB domain maps to 1-56; it reads MKGGETMSVRRSGYKAVVDGVGGRRRREDDMVEIRKAKREESLLKKRREALPHSPS. ARM repeat units lie at residues 93–133, 136–175, 178–218, 220–259, 262–301, 304–344, 347–386, and 390–429; these read NVRV…NIAS, SENTEVVIDHGAVAILVRLLNSPYDVVREQVVWALGNISG, PRCR…NLCR, KPQPPFDQVSAALPALAQLIRLDDKELLAYTCWALVYLSD, NEKIQAVIEANVCARLIGLSIHRSPSVITPALRTIGNIVT, DSQT…NITA, QSQIQAVFDADICPALVNLLQNSEGDVKKEAAWAICNAIA, and YKQIMFLVKQECIKPLCDLLTCSDTQLVMVCLEALKKILK.

It belongs to the importin alpha family. In terms of assembly, forms a complex with importin subunit beta-1.

It localises to the nucleus envelope. In terms of biological role, binds to conventional NLS motifs and mediates nuclear protein import across the nuclear envelope. Acts as a cellular receptor for the nuclear import of the virD2 protein of Agrobacterium, but is not essential for Agrobacterium-mediated root transformation. This is Importin subunit alpha-7 from Arabidopsis thaliana (Mouse-ear cress).